The chain runs to 394 residues: Proliferation-associated protein 2G4 (394 aa).

S2 carries the post-translational modification N-acetylserine. S2 carries the phosphoserine modification. Positions 2–48 are necessary for nucleolar localization; that stretch reads SGEDEQQEQTIAEDLVVTKYKMGGDIANRVLRSLVEASSSGVSVLSL. The tract at residues 46-54 is RNA-binding; that stretch reads LSLCEKGDA. K298 participates in a covalent cross-link: Glycyl lysine isopeptide (Lys-Gly) (interchain with G-Cter in SUMO2). The tract at residues 301 to 394 is necessary for nucleolar localization; sequence LLQPFNVLYE…ETLEENGAGD (94 aa). Residue S335 is modified to Phosphoserine. The tract at residues 358–394 is disordered; it reads LQSSASRKTQKKKKKKASKTAENATSGETLEENGAGD. S361 bears the Phosphoserine; by PKC/PRKCD mark. Residues 361–375 are interaction with RNA; sequence SASRKTQKKKKKKAS. The span at 365 to 375 shows a compositional bias: basic residues; that stretch reads KTQKKKKKKAS. A phosphothreonine mark is found at T366 and T386.

It belongs to the peptidase M24 family. Isoform 2 interacts with the cytoplasmic domain of non-phosphorylated ERBB3; the interaction requires PKC activity. Interacts with AR. Treatment with HRG leads to dissociation from ERBB3 and increases association with AR. Interacts with nucleolin/NCL. Component of a ribonucleoprotein complex containing at least PA2G4, NCL, TOP1, PABPC2, RPLP0, acetylated histone H1 (HIST1H1A or H1F1), histone H1 2/4, RPL4, RPL8, RPL15, RPL18, RPL18A, RPL21, RPL11, RPL12, RPL28, RPL27, RPLP2 and RPL24. Interacts with HDAC2. Interacts with RB1; the interaction is enhanced upon PA2G4 dephosphorylation. Isoform 1 and isoform 2 interact with RNF20. Isoform 2 interacts with HUWE1. Interacts with AKT1. Interacts with DNAJC21. Post-translationally, phosphorylated on serine and threonine residues. Phosphorylation is enhanced by HRG treatment. Basal phosphorylation is PKC-dependent and HRG-induced phosphorylation is predominantly PKC-independent. Phosphorylation at Ser-361 by PKC/PRKCD regulates its nucleolar localization. Isoform 2 is polyubiquitinated, leading to proteasomal degradation and phosphorylation by PKC/PRKCD enhances polyubiquitination.

Its subcellular location is the cytoplasm. The protein resides in the nucleus. The protein localises to the nucleolus. In terms of biological role, may play a role in a ERBB3-regulated signal transduction pathway. Seems be involved in growth regulation. Acts a corepressor of the androgen receptor (AR) and is regulated by the ERBB3 ligand neuregulin-1/heregulin (HRG). Inhibits transcription of some E2F1-regulated promoters, probably by recruiting histone acetylase (HAT) activity. Binds RNA. Associates with 28S, 18S and 5.8S mature rRNAs, several rRNA precursors and probably U3 small nucleolar RNA. May be involved in regulation of intermediate and late steps of rRNA processing. May be involved in ribosome assembly. Mediates cap-independent translation of specific viral IRESs (internal ribosomal entry site). Together with PTBP1 is required for the translation initiation on the foot-and-mouth disease virus (FMDV) IRES. Regulates cell proliferation, differentiation, and survival. Isoform 1 suppresses apoptosis whereas isoform 2 promotes cell differentiation. In Rattus norvegicus (Rat), this protein is Proliferation-associated protein 2G4 (Pa2g4).